The following is a 458-amino-acid chain: MSALSSNRLPNRASLVTNRAFSALEGFLHVEAFSGIVLLLAAAAALIFANSQYASVYESLWHTPLGFNFGHFTLSWDLHFWVNDALMTVFFLVAGMEIRREIHEGALADFKQAILPIVSAIGGVCFPALIYLSFNFNSEHTHGWAVPTATDIAFALGILALLGKKIPANLHVILLSLAIIDDIIAVLIIAFFYSTNIDPSGLAIAIAGIALVLFFQWIGLASAWLYILPGAIIWWGLMITGVHPSLTGVILGMMTPVFPTRTLVAPLTILSNAMQILQEKNIKTDLHHISTALKKMRKGQRDMIAPVIRVQKTLHPWVAYGVMPIFAFANAGVSFANFDLSSHESFLVVLSVVIGLFIGKPLGIITASYLAVKSGLCRLPPHMTWTGILLIGFLAGIGFTMSIFVSMLAFKDIVLLDSAKIGVLCGSGLSALAGLGYGLIYIKRNKNKKVLHNLNGIK.

The next 12 helical transmembrane spans lie at 27-47 (FLHV…AALI), 78-98 (LHFW…GMEI), 114-134 (ILPI…YLSF), 143-163 (GWAV…ALLG), 172-192 (VILL…IAFF), 201-221 (GLAI…IGLA), 222-242 (SAWL…ITGV), 249-269 (VILG…PLTI), 316-336 (PWVA…VSFA), 346-366 (FLVV…GIIT), 388-408 (ILLI…VSML), and 421-441 (IGVL…GLIY).

Belongs to the NhaA Na(+)/H(+) (TC 2.A.33) antiporter family.

It localises to the cell inner membrane. It carries out the reaction Na(+)(in) + 2 H(+)(out) = Na(+)(out) + 2 H(+)(in). Its function is as follows. Na(+)/H(+) antiporter that extrudes sodium in exchange for external protons. The sequence is that of Na(+)/H(+) antiporter NhaA from Bartonella quintana (strain Toulouse) (Rochalimaea quintana).